We begin with the raw amino-acid sequence, 1174 residues long: Protein kinase C-like (1174 aa).

Residues 1–68 (MANVEETVAN…LRDLDLQRTT (68 aa)) form the REM-1 1 domain. The segment covering 69-84 (SGVDNMSLQPGRSPTN) has biased composition (polar residues). The disordered stretch occupies residues 69–140 (SGVDNMSLQP…PPPATANKRP (72 aa)). The segment covering 96-123 (GYAQQDQGGYGGPQSQYSQLSGGEALQP) has biased composition (low complexity). Pro residues predominate over residues 124–134 (PRAPFAAPPPA). In terms of domain architecture, REM-1 2 spans 149–226 (KYDTPHLGPR…LKRYEDLHVD (78 aa)). The region spanning 229–349 (GDGDDNDSLD…MRRKKLETEL (121 aa)) is the C2 domain. The interval 358–406 (DKMGGHTGIQPDMQFQPPPGQSPAGGPGGGPTPAGVRPPGAPQPQTGPI) is disordered. Positions 380-389 (PAGGPGGGPT) are enriched in gly residues. Phorbol-ester/DAG-type zinc fingers lie at residues 458-506 (GHKF…VTKC) and 526-576 (PHRF…PDFC). The segment at 593-842 (TRRGQSSSGP…PAANTQGTGK (250 aa)) is disordered. Over residues 596 to 611 (GQSSSGPGMSQRTLRP) the composition is skewed to polar residues. Residues 624-636 (QSPGQPGQESPTQ) show a composition bias toward low complexity. Positions 648–657 (SPPPGPPRQP) are enriched in pro residues. A compositionally biased stretch (low complexity) spans 658-709 (SYPSSATSVDAARASYSTTGTASTGAPTSPTSGSRPPSGPRTQSSVAAAAAA). Residues 720–744 (RSNTDYSPQSGRSSGSGYPTEQRMS) show a composition bias toward polar residues. The segment covering 786–802 (LPQPPPPQSPPQHPQQP) has biased composition (pro residues). The span at 808–820 (KMPEQQALTQQPP) shows a compositional bias: polar residues. The Protein kinase domain maps to 849–1108 (FNFLAVLGKG…AQEIMSHAFF (260 aa)). ATP is bound by residues 855–863 (LGKGNFGKV) and K878. Residue D974 is the Proton acceptor of the active site. The region spanning 1109–1174 (RNINWDDIYH…RGFSYSADFA (66 aa)) is the AGC-kinase C-terminal domain.

It belongs to the protein kinase superfamily. AGC Ser/Thr protein kinase family. PKC subfamily.

It catalyses the reaction L-seryl-[protein] + ATP = O-phospho-L-seryl-[protein] + ADP + H(+). The enzyme catalyses L-threonyl-[protein] + ATP = O-phospho-L-threonyl-[protein] + ADP + H(+). In Cochliobolus heterostrophus (Southern corn leaf blight fungus), this protein is Protein kinase C-like (PKC1).